The primary structure comprises 492 residues: Ketol-acid reductoisomerase (NADP(+)) (492 aa).

Positions 15–208 constitute a KARI N-terminal Rossmann domain; the sequence is AQLGKCRFMA…GGHRAGVLES (194 aa). Residues 45–48, arginine 68, arginine 76, serine 78, and 108–110 each bind NADP(+); these read CGAQ and DKQ. Histidine 132 is an active-site residue. Glycine 158 is an NADP(+) binding site. KARI C-terminal knotted domains follow at residues 209–344 and 345–485; these read SFVA…NAPQ and FEGK…MTDM. Residues aspartate 217, glutamate 221, glutamate 389, and glutamate 393 each coordinate Mg(2+). Serine 414 serves as a coordination point for substrate.

The protein belongs to the ketol-acid reductoisomerase family. Mg(2+) serves as cofactor.

It catalyses the reaction (2R)-2,3-dihydroxy-3-methylbutanoate + NADP(+) = (2S)-2-acetolactate + NADPH + H(+). The enzyme catalyses (2R,3R)-2,3-dihydroxy-3-methylpentanoate + NADP(+) = (S)-2-ethyl-2-hydroxy-3-oxobutanoate + NADPH + H(+). It functions in the pathway amino-acid biosynthesis; L-isoleucine biosynthesis; L-isoleucine from 2-oxobutanoate: step 2/4. It participates in amino-acid biosynthesis; L-valine biosynthesis; L-valine from pyruvate: step 2/4. Its function is as follows. Involved in the biosynthesis of branched-chain amino acids (BCAA). Catalyzes an alkyl-migration followed by a ketol-acid reduction of (S)-2-acetolactate (S2AL) to yield (R)-2,3-dihydroxy-isovalerate. In the isomerase reaction, S2AL is rearranged via a Mg-dependent methyl migration to produce 3-hydroxy-3-methyl-2-ketobutyrate (HMKB). In the reductase reaction, this 2-ketoacid undergoes a metal-dependent reduction by NADPH to yield (R)-2,3-dihydroxy-isovalerate. The polypeptide is Ketol-acid reductoisomerase (NADP(+)) (Yersinia enterocolitica serotype O:8 / biotype 1B (strain NCTC 13174 / 8081)).